The following is a 612-amino-acid chain: Pentatricopeptide repeat-containing protein At4g14050, mitochondrial (612 aa).

The transit peptide at 1–24 directs the protein to the mitochondrion; that stretch reads MLIPHYLHQLQLCARNRTLTTAKA. 11 PPR repeats span residues 37–71, 72–103, 104–138, 139–169, 170–204, 205–235, 237–271, 272–302, 303–337, 338–373, and 374–408; these read CCPL…DHIA, WASV…GLRP, DDFV…EYAN, DEVV…IRVK, NTIS…NLYS, WTAL…RVDI, DPLV…GFDS, CVFI…MRHR, DVVS…GVKP, NEVT…GIRP, and SLQH…PDEP. A type E motif region spans residues 409-485; the sequence is TWAALLSACK…DPGHSSVEVR (77 aa). Positions 486 to 516 are type E(+) motif; sequence KETEVFYAGETSHPLKEDIFRLLKKLEEEMR. Residues 518-612 are type DYW motif; it reads RNGYVPDTSW…GGKCSCNDFW (95 aa).

This sequence belongs to the PPR family. PCMP-H subfamily. In terms of assembly, interacts with MORF8/RIP1 and MORF1/RIP8.

The protein resides in the mitochondrion. In terms of biological role, involved in C-to-U editing of mitochondrial RNA. Required specifically for editing the mitochondrial NAD4, MT-CYB/COB and RPL16 transcripts. In Arabidopsis thaliana (Mouse-ear cress), this protein is Pentatricopeptide repeat-containing protein At4g14050, mitochondrial (PCMP-H13).